The primary structure comprises 88 residues: Molybdopterin synthase sulfur carrier subunit (88 aa).

Gly-88 bears the 1-thioglycine; alternate mark. A Glycyl adenylate; alternate modification is found at Gly-88.

Belongs to the MoaD family. MOCS2A subfamily. As to quaternary structure, heterotetramer; composed of 2 small (MOCS2A) and 2 large (MOCS2B) subunits. Post-translationally, C-terminal thiocarboxylation occurs in 2 steps, it is first acyl-adenylated (-COAMP) via the hesA/moeB/thiF part of MOCS3, then thiocarboxylated (-COSH) via the rhodanese domain of MOCS3.

It is found in the cytoplasm. It localises to the cytosol. Its pathway is cofactor biosynthesis; molybdopterin biosynthesis. Functionally, acts as a sulfur carrier required for molybdopterin biosynthesis. Component of the molybdopterin synthase complex that catalyzes the conversion of precursor Z into molybdopterin by mediating the incorporation of 2 sulfur atoms into precursor Z to generate a dithiolene group. In the complex, serves as sulfur donor by being thiocarboxylated (-COSH) at its C-terminus by MOCS3. After interaction with MOCS2B, the sulfur is then transferred to precursor Z to form molybdopterin. In Mus musculus (Mouse), this protein is Molybdopterin synthase sulfur carrier subunit.